The following is a 249-amino-acid chain: Acetate transporter protein patA (249 aa).

6 helical membrane passes run 42–62 (IGSP…TLSM), 71–91 (AITN…LVLV), 106–126 (VFGG…PAFG), 141–161 (AIGY…VAAM), 169–189 (GMLG…FSFA), and 202–222 (AAGA…GHLM).

The protein belongs to the acetate uptake transporter (AceTr) (TC 2.A.96) family.

Its subcellular location is the endoplasmic reticulum membrane. The protein operates within mycotoxin biosynthesis; patulin biosynthesis. Its function is as follows. Acetate transporter protein; part of the gene cluster that mediates the biosynthesis of patulin, an acetate-derived tetraketide mycotoxin produced by several fungal species that shows antimicrobial properties against several bacteria. May be involved in the uptake of acetate, a substrate for the synthesis of 6-methylsalicylic acid by the polyketide synthase patK. The protein is Acetate transporter protein patA of Penicillium expansum (Blue mold rot fungus).